Reading from the N-terminus, the 152-residue chain is SsrA-binding protein (152 aa).

It belongs to the SmpB family.

Its subcellular location is the cytoplasm. Required for rescue of stalled ribosomes mediated by trans-translation. Binds to transfer-messenger RNA (tmRNA), required for stable association of tmRNA with ribosomes. tmRNA and SmpB together mimic tRNA shape, replacing the anticodon stem-loop with SmpB. tmRNA is encoded by the ssrA gene; the 2 termini fold to resemble tRNA(Ala) and it encodes a 'tag peptide', a short internal open reading frame. During trans-translation Ala-aminoacylated tmRNA acts like a tRNA, entering the A-site of stalled ribosomes, displacing the stalled mRNA. The ribosome then switches to translate the ORF on the tmRNA; the nascent peptide is terminated with the 'tag peptide' encoded by the tmRNA and targeted for degradation. The ribosome is freed to recommence translation, which seems to be the essential function of trans-translation. This chain is SsrA-binding protein, found in Rickettsia massiliae (strain Mtu5).